The chain runs to 969 residues: Dual serine/threonine and tyrosine protein kinase (969 aa).

The stretch at 7–37 (QEFRRYLRNRNQLQHVLEETQQALELINLEN) forms a coiled coil. In terms of domain architecture, Protein kinase spans 632 to 894 (PHCAEEIGRG…PLLGAIVPVL (263 aa)). ATP contacts are provided by residues 638–646 (IGRGQYGIV) and Lys662. Residue Asp760 is the Proton acceptor of the active site. The disordered stretch occupies residues 904 to 945 (SKSLQEVSSDKLQESSTDSRNPALALAEPYNQRGTVVSPPPT).

The protein belongs to the protein kinase superfamily. Ser/Thr protein kinase family.

It is found in the cytoplasm. It carries out the reaction L-seryl-[protein] + ATP = O-phospho-L-seryl-[protein] + ADP + H(+). It catalyses the reaction L-threonyl-[protein] + ATP = O-phospho-L-threonyl-[protein] + ADP + H(+). The enzyme catalyses L-tyrosyl-[protein] + ATP = O-phospho-L-tyrosyl-[protein] + ADP + H(+). The chain is Dual serine/threonine and tyrosine protein kinase from Apis mellifera (Honeybee).